Reading from the N-terminus, the 380-residue chain is 1-deoxy-D-xylulose 5-phosphate reductoisomerase (380 aa).

8 residues coordinate NADPH: Ser-10, Gly-11, Ser-12, Ile-13, Gly-36, Lys-37, Asn-38, and Asn-120. Lys-121 is a binding site for 1-deoxy-D-xylulose 5-phosphate. Residue Glu-122 participates in NADPH binding. Asp-146 contributes to the Mn(2+) binding site. Positions 147, 148, 172, and 195 each coordinate 1-deoxy-D-xylulose 5-phosphate. Glu-148 is a binding site for Mn(2+). Residue Gly-201 participates in NADPH binding. 1-deoxy-D-xylulose 5-phosphate is bound by residues Ser-208, Asn-213, Lys-214, and Glu-217. Residue Glu-217 participates in Mn(2+) binding.

This sequence belongs to the DXR family. The cofactor is Mg(2+). It depends on Mn(2+) as a cofactor.

The enzyme catalyses 2-C-methyl-D-erythritol 4-phosphate + NADP(+) = 1-deoxy-D-xylulose 5-phosphate + NADPH + H(+). It participates in isoprenoid biosynthesis; isopentenyl diphosphate biosynthesis via DXP pathway; isopentenyl diphosphate from 1-deoxy-D-xylulose 5-phosphate: step 1/6. Catalyzes the NADPH-dependent rearrangement and reduction of 1-deoxy-D-xylulose-5-phosphate (DXP) to 2-C-methyl-D-erythritol 4-phosphate (MEP). The protein is 1-deoxy-D-xylulose 5-phosphate reductoisomerase of Bacillus cereus (strain AH187).